The primary structure comprises 419 residues: UDP-N-acetylglucosamine 1-carboxyvinyltransferase (419 aa).

22–23 (KN) contacts phosphoenolpyruvate. Arginine 95 serves as a coordination point for UDP-N-acetyl-alpha-D-glucosamine. Cysteine 119 (proton donor) is an active-site residue. Residue cysteine 119 is modified to 2-(S-cysteinyl)pyruvic acid O-phosphothioketal. Residues aspartate 308 and isoleucine 330 each contribute to the UDP-N-acetyl-alpha-D-glucosamine site.

It belongs to the EPSP synthase family. MurA subfamily.

Its subcellular location is the cytoplasm. It carries out the reaction phosphoenolpyruvate + UDP-N-acetyl-alpha-D-glucosamine = UDP-N-acetyl-3-O-(1-carboxyvinyl)-alpha-D-glucosamine + phosphate. The protein operates within cell wall biogenesis; peptidoglycan biosynthesis. Cell wall formation. Adds enolpyruvyl to UDP-N-acetylglucosamine. This is UDP-N-acetylglucosamine 1-carboxyvinyltransferase from Rickettsia bellii (strain OSU 85-389).